The following is a 322-amino-acid chain: Undecaprenyl-phosphate 4-deoxy-4-formamido-L-arabinose transferase (322 aa).

The Cytoplasmic segment spans residues 1 to 235 (MFEIHPVKKV…TCLTTTPLRM (235 aa)). The chain crosses the membrane as a helical span at residues 236-256 (LSLLGSIIAIGGFSIAVLLVI). Over 257-269 (LRLTFGPQWAAEG) the chain is Periplasmic. Residues 270-290 (VFMLFAVLFTFIGAQFIGMGL) traverse the membrane as a helical segment. The Cytoplasmic segment spans residues 291-322 (LGEYIGRIYTDVRARPRYFVQQVIRPSSKENE).

This sequence belongs to the glycosyltransferase 2 family.

The protein resides in the cell inner membrane. The enzyme catalyses UDP-4-deoxy-4-formamido-beta-L-arabinose + di-trans,octa-cis-undecaprenyl phosphate = 4-deoxy-4-formamido-alpha-L-arabinopyranosyl di-trans,octa-cis-undecaprenyl phosphate + UDP. It participates in glycolipid biosynthesis; 4-amino-4-deoxy-alpha-L-arabinose undecaprenyl phosphate biosynthesis; 4-amino-4-deoxy-alpha-L-arabinose undecaprenyl phosphate from UDP-4-deoxy-4-formamido-beta-L-arabinose and undecaprenyl phosphate: step 1/2. Its pathway is bacterial outer membrane biogenesis; lipopolysaccharide biosynthesis. In terms of biological role, catalyzes the transfer of 4-deoxy-4-formamido-L-arabinose from UDP to undecaprenyl phosphate. The modified arabinose is attached to lipid A and is required for resistance to polymyxin and cationic antimicrobial peptides. This Escherichia coli (strain SMS-3-5 / SECEC) protein is Undecaprenyl-phosphate 4-deoxy-4-formamido-L-arabinose transferase.